We begin with the raw amino-acid sequence, 427 residues long: Adenylosuccinate synthetase (427 aa).

Residues 12–18 and 40–42 each bind GTP; these read GDEGKGK and GHT. Asp13 serves as the catalytic Proton acceptor. The Mg(2+) site is built by Asp13 and Gly40. IMP-binding positions include 13-16, 38-41, Thr128, Arg142, Gln223, Thr238, and Arg302; these read DEGK and NAGH. The Proton donor role is filled by His41. Residue 298-304 participates in substrate binding; the sequence is TTTGRAR. GTP is bound by residues Arg304, 330 to 332, and 412 to 414; these read KLD and AVG.

The protein belongs to the adenylosuccinate synthetase family. As to quaternary structure, homodimer. The cofactor is Mg(2+).

It localises to the cytoplasm. The catalysed reaction is IMP + L-aspartate + GTP = N(6)-(1,2-dicarboxyethyl)-AMP + GDP + phosphate + 2 H(+). The protein operates within purine metabolism; AMP biosynthesis via de novo pathway; AMP from IMP: step 1/2. In terms of biological role, plays an important role in the de novo pathway of purine nucleotide biosynthesis. Catalyzes the first committed step in the biosynthesis of AMP from IMP. The polypeptide is Adenylosuccinate synthetase (Desulfitobacterium hafniense (strain Y51)).